A 360-amino-acid polypeptide reads, in one-letter code: Phospho-N-acetylmuramoyl-pentapeptide-transferase (360 aa).

10 helical membrane-spanning segments follow: residues 21–41 (YLTL…FIVG), 70–90 (GTPT…TLLW), 97–117 (YVWA…VDDY), 134–154 (YLWQ…TASS), 168–188 (VVLN…VGSS), 199–219 (GLAI…AYAS), 236–256 (AGEL…FLWF), 263–283 (VFMG…VAVL), 288–308 (IVLM…MLQV), and 338–358 (VIVR…ATLK).

Belongs to the glycosyltransferase 4 family. MraY subfamily. The cofactor is Mg(2+).

The protein localises to the cell inner membrane. It carries out the reaction UDP-N-acetyl-alpha-D-muramoyl-L-alanyl-gamma-D-glutamyl-meso-2,6-diaminopimeloyl-D-alanyl-D-alanine + di-trans,octa-cis-undecaprenyl phosphate = di-trans,octa-cis-undecaprenyl diphospho-N-acetyl-alpha-D-muramoyl-L-alanyl-D-glutamyl-meso-2,6-diaminopimeloyl-D-alanyl-D-alanine + UMP. Its pathway is cell wall biogenesis; peptidoglycan biosynthesis. Functionally, catalyzes the initial step of the lipid cycle reactions in the biosynthesis of the cell wall peptidoglycan: transfers peptidoglycan precursor phospho-MurNAc-pentapeptide from UDP-MurNAc-pentapeptide onto the lipid carrier undecaprenyl phosphate, yielding undecaprenyl-pyrophosphoryl-MurNAc-pentapeptide, known as lipid I. The sequence is that of Phospho-N-acetylmuramoyl-pentapeptide-transferase from Methylococcus capsulatus (strain ATCC 33009 / NCIMB 11132 / Bath).